The sequence spans 62 residues: Flavodoxin (62 aa).

The Flavodoxin-like domain maps to 4 to 62; sequence IGIFFGTDTGKTRKIAKMIHKQLGELADAPVNINRTTLDDFMAYPVLLLGTPTLGDGQL.

This sequence belongs to the flavodoxin family. It depends on FMN as a cofactor.

Low-potential electron donor to a number of redox enzymes. NifF is the electron donor to nitrogenase. This is Flavodoxin (nifF) from Klebsiella oxytoca.